The sequence spans 176 residues: DELTA-stichotoxin-She4a (176 aa).

Residues 2 to 11 are plays an important role in the hemolytic activity; that stretch reads ELAGTIIDGA. Residues 10-29 form an N-terminal region region; it reads GASLTFEVLDKVLGELGKVS. Positions 53, 86, 104, 106, 132, 136, and 137 each coordinate phosphocholine. The trp-rich region, which is important for the binding to lipid membrane stretch occupies residues 104 to 119; that stretch reads SVPFDYNWYSNWWDVK. The short motif at 142-144 is the Cell attachment site element; that stretch reads RGD.

Octamer or nonamer in membranes. Monomer in the soluble state.

Its subcellular location is the secreted. It localises to the nematocyst. The protein localises to the target cell membrane. Pore-forming protein that forms cations-selective hydrophilic pores of around 1 nm and causes cardiac stimulation and cytolysis. Pore formation is a multi-step process that involves specific recognition of membrane sphingomyelin (but neither cholesterol nor phosphatidylcholine) using aromatic rich region and adjacent phosphocholine (POC) binding site, firm binding to the membrane (mainly driven by hydrophobic interactions) accompanied by the transfer of the N-terminal region to the lipid-water interface and finally pore formation after oligomerization of monomers. Cytolytic effects include red blood cells hemolysis, platelet aggregation and lysis, cytotoxic and cytostatic effects on fibroblasts. Lethality in mammals has been ascribed to severe vasospasm of coronary vessels, cardiac arrhythmia, and inotropic effects. The sequence is that of DELTA-stichotoxin-She4a from Stichodactyla helianthus (Sun anemone).